Reading from the N-terminus, the 213-residue chain is Motile sperm domain-containing protein 1 (213 aa).

Positions 16 to 143 (PVFVFPTELI…KEHLTESLFF (128 aa)) constitute an MSP domain. The next 2 helical transmembrane spans lie at 159-179 (SLLT…PTLG) and 191-211 (LSVN…MAIL). The Nuclear export signal signature appears at 205–208 (LITM).

It localises to the endoplasmic reticulum membrane. The protein resides in the golgi apparatus membrane. In terms of biological role, plays a role in differentiation and/or proliferation of mesenchymal stem cells. Proposed to be involved in epithelial-to-mesenchymal transition (EMT). However, another study suggests that it is not required for EMT or stem cell self-renewal and acts during later stages of differentiation. This Homo sapiens (Human) protein is Motile sperm domain-containing protein 1 (MOSPD1).